Reading from the N-terminus, the 225-residue chain is F-box protein SKIP27 (225 aa).

Positions 121–169 (KSRLECLPQDLLIRVICGVDHEDLKSLKLVSKSIREASLVAKTLHFAYT) constitute an F-box domain.

Part of a SCF (ASK-cullin-F-box) protein ligase complex. Interacts with SKP1A/ASK1 and SPK1B/ASK2.

Its subcellular location is the nucleus. It participates in protein modification; protein ubiquitination. In terms of biological role, component of SCF(ASK-cullin-F-box) E3 ubiquitin ligase complexes, which may mediate the ubiquitination and subsequent proteasomal degradation of target proteins. In Arabidopsis thaliana (Mouse-ear cress), this protein is F-box protein SKIP27 (SKIP27).